The primary structure comprises 129 residues: DNA-directed RNA polymerase III subunit rpc9 (129 aa).

It belongs to the eukaryotic RPC9 RNA polymerase subunit family. Component of the RNA polymerase III (Pol III) complex.

It is found in the cytoplasm. The protein localises to the nucleus. Functionally, DNA-dependent RNA polymerase catalyzes the transcription of DNA into RNA using the four ribonucleoside triphosphates as substrates. Specific peripheric component of RNA polymerase III which synthesizes small RNAs, such as 5S rRNA and tRNAs. This chain is DNA-directed RNA polymerase III subunit rpc9 (rpc17), found in Schizosaccharomyces pombe (strain 972 / ATCC 24843) (Fission yeast).